A 297-amino-acid polypeptide reads, in one-letter code: Formamidopyrimidine-DNA glycosylase (297 aa).

Catalysis depends on proline 2, which acts as the Schiff-base intermediate with DNA. The active-site Proton donor is the glutamate 3. Lysine 58 acts as the Proton donor; for beta-elimination activity in catalysis. Histidine 104, arginine 127, and lysine 170 together coordinate DNA. The FPG-type zinc finger occupies 261–297 (SVYDREGKPCRKEGCSGTIQRFVQGGRSTFYCPICQR). Catalysis depends on arginine 287, which acts as the Proton donor; for delta-elimination activity.

The protein belongs to the FPG family. In terms of assembly, monomer. It depends on Zn(2+) as a cofactor.

The catalysed reaction is Hydrolysis of DNA containing ring-opened 7-methylguanine residues, releasing 2,6-diamino-4-hydroxy-5-(N-methyl)formamidopyrimidine.. It carries out the reaction 2'-deoxyribonucleotide-(2'-deoxyribose 5'-phosphate)-2'-deoxyribonucleotide-DNA = a 3'-end 2'-deoxyribonucleotide-(2,3-dehydro-2,3-deoxyribose 5'-phosphate)-DNA + a 5'-end 5'-phospho-2'-deoxyribonucleoside-DNA + H(+). Involved in base excision repair of DNA damaged by oxidation or by mutagenic agents. Acts as a DNA glycosylase that recognizes and removes damaged bases. Has a preference for oxidized purines, such as 7,8-dihydro-8-oxoguanine (8-oxoG). Has AP (apurinic/apyrimidinic) lyase activity and introduces nicks in the DNA strand. Cleaves the DNA backbone by beta-delta elimination to generate a single-strand break at the site of the removed base with both 3'- and 5'-phosphates. The protein is Formamidopyrimidine-DNA glycosylase of Chelativorans sp. (strain BNC1).